The chain runs to 449 residues: Signal recognition particle protein (449 aa).

GTP is bound by residues 109–116 (GLQGSGKT), 191–195 (DTAGR), and 249–252 (SRID).

Belongs to the GTP-binding SRP family. SRP54 subfamily. Part of the signal recognition particle protein translocation system, which is composed of SRP and FtsY. SRP is a ribonucleoprotein composed of Ffh and a 4.5S RNA molecule.

It localises to the cytoplasm. The catalysed reaction is GTP + H2O = GDP + phosphate + H(+). Functionally, involved in targeting and insertion of nascent membrane proteins into the cytoplasmic membrane. Binds to the hydrophobic signal sequence of the ribosome-nascent chain (RNC) as it emerges from the ribosomes. The SRP-RNC complex is then targeted to the cytoplasmic membrane where it interacts with the SRP receptor FtsY. Interaction with FtsY leads to the transfer of the RNC complex to the Sec translocase for insertion into the membrane, the hydrolysis of GTP by both Ffh and FtsY, and the dissociation of the SRP-FtsY complex into the individual components. The sequence is that of Signal recognition particle protein from Rickettsia conorii (strain ATCC VR-613 / Malish 7).